Here is a 960-residue protein sequence, read N- to C-terminus: Importin alpha re-exporter (960 aa).

HEAT repeat units lie at residues 1–33, 34–73, 74–120, 121–157, 158–220, 221–278, 279–323, 324–392, 393–445, 446–489, 490–528, 529–586, 587–630, 631–674, 675–716, 717–751, 752–794, and 795–826; these read MSDL…LETQ, DGFG…VDEN, GNHL…FPDR, WPTL…WRPL, FRSD…NCQD, IPEF…TRYE, DVFG…TRIP, KYFE…KEKN, EVLV…GVSS, TNNL…RNQL, TKAQ…TIRE, SNTS…TSED, SIQP…LNYT, QRQN…QSAT, IPES…SSIF, PDLV…LLID, MNRL…NKLG, and SDFL…PTIG. The Importin N-terminal domain maps to 23 to 96; that stretch reads SERNLRQLET…KKEIVPLMIS (74 aa). The Nuclear localization signal motif lies at 366-381; sequence RRDLEGSDTDTRRRAC. Residues 827 to 928 form an HEAT 19; with insert repeat; the sequence is NLLDRKIALI…RLYVAEALNK (102 aa). The stretch at 929 to 960 is one HEAT 20 repeat; that stretch reads YNAISGNTFLNTILPQLTQENQVKLNQLLVGN.

The protein belongs to the XPO2/CSE1 family. Binds with high affinity to SRP1 only in the presence of RanGTP. The complex is dissociated by the RanGTP-binding protein YRB1.

It is found in the cytoplasm. The protein resides in the nucleus. Its function is as follows. Export receptor for importin alpha (SRP1). Mediates importin-alpha re-export from the nucleus to the cytoplasm after import substrates have been released into the nucleoplasm. In Saccharomyces cerevisiae (strain ATCC 204508 / S288c) (Baker's yeast), this protein is Importin alpha re-exporter (CSE1).